The sequence spans 183 residues: uncharacterized protein (183 aa).

This sequence belongs to the isochorismatase family.

This is an uncharacterized protein from Bacillus subtilis (strain 168).